We begin with the raw amino-acid sequence, 207 residues long: 8-oxoguanine DNA glycosylase/AP lyase (207 aa).

Catalysis depends on residues Lys128 and Asp146.

This sequence belongs to the type-2 OGG1 family.

It catalyses the reaction 2'-deoxyribonucleotide-(2'-deoxyribose 5'-phosphate)-2'-deoxyribonucleotide-DNA = a 3'-end 2'-deoxyribonucleotide-(2,3-dehydro-2,3-deoxyribose 5'-phosphate)-DNA + a 5'-end 5'-phospho-2'-deoxyribonucleoside-DNA + H(+). Its function is as follows. Catalyzes the excision of an oxidatively damaged form of guanine (7,8-dihydro-8-oxoguanine = 8-oxoG) from DNA. Also cleaves the DNA backbone at apurinic/apyrimidinic sites (AP sites). The protein is 8-oxoguanine DNA glycosylase/AP lyase of Saccharolobus solfataricus (strain ATCC 35092 / DSM 1617 / JCM 11322 / P2) (Sulfolobus solfataricus).